The sequence spans 503 residues: Protein phosphatase eya-1 (503 aa).

The active-site Nucleophile is the Asp237. Positions 237 and 239 each coordinate Mg(2+). Asp239 (proton donor) is an active-site residue.

The protein belongs to the HAD-like hydrolase superfamily. EYA family. As to quaternary structure, interacts (via C-terminus) with ceh-34 (via N-terminus). It depends on Mg(2+) as a cofactor. Expressed in body wall muscles. Expressed in BAG sensory neurons and in other head neurons.

The protein localises to the nucleus. The enzyme catalyses O-phospho-L-tyrosyl-[protein] + H2O = L-tyrosyl-[protein] + phosphate. Functionally, tyrosine protein phosphatase. Acts probably as a transcription regulator in the embryonic and postembryonic development of several tissues including pharynx, vulva and gonads. Required for the development of anterior tissues during late embryogenesis. Together with ceh-34, required to specify the coelomocyte fate in embryonic and postembryonic precursors. In the anterior part of the embryo, prevents apoptosis in cells that are not fated to die. Together with ceh-34 activates proapoptotic factor egl-1 expression to promote motor neuron M4 sister cell apoptosis. Also promotes apoptosis of I1 pharyngeal neuron sister cell. Plays a role in locomotion and fertility. May play a role in resistance to heat and oxidative stresses. May cooperate with the transcription factors vab-3 and ceh-32 to repress transcription factor ets-5 expression in non BAG neuronal cells. This Caenorhabditis elegans protein is Protein phosphatase eya-1.